The primary structure comprises 314 residues: Methylglutaconyl-CoA hydratase, mitochondrial (314 aa).

Residues 1–42 (MAAAAPGALGALRTGRVRLVAACCARLGPAAWARGTAPRRGY) constitute a mitochondrion transit peptide. Position 75 is an N6-acetyllysine; alternate (K75). K75 bears the N6-succinyllysine; alternate mark. An RNA-binding region spans residues 80–94 (KNLLKMLSKAVDALK). K84 is subject to N6-succinyllysine. 2 positions are modified to N6-acetyllysine; alternate: K88 and K119. 2 positions are modified to N6-succinyllysine; alternate: K88 and K119. Residues K123 and K135 each carry the N6-succinyllysine modification. N6-acetyllysine; alternate is present on residues K179 and K186. N6-succinyllysine; alternate is present on residues K179 and K186. K304 is modified (N6-succinyllysine).

It belongs to the enoyl-CoA hydratase/isomerase family. Homohexamer. In terms of tissue distribution, detected in heart, brain, liver, spleen, skeletal muscle and kidney. Expressed in brain, kidney, liver and spleen tissue (at protein level).

Its subcellular location is the mitochondrion. The catalysed reaction is (3S)-3-hydroxy-3-methylglutaryl-CoA = 3-methyl-(2E)-glutaconyl-CoA + H2O. It carries out the reaction (3S)-citramalyl-CoA = itaconyl-CoA + H2O. The enzyme catalyses 3-hydroxyisovaleryl-CoA = 3-methylbut-2-enoyl-CoA + H2O. It catalyses the reaction (S)-3-hydroxyglutaryl-CoA = (2E)-glutaconyl-CoA + H2O. Its pathway is amino-acid degradation; L-leucine degradation; (S)-3-hydroxy-3-methylglutaryl-CoA from 3-isovaleryl-CoA: step 3/3. Its function is as follows. Catalyzes the fifth step in the leucine degradation pathway, the reversible hydration of 3-methylglutaconyl-CoA (3-MG-CoA) to 3-hydroxy-3-methylglutaryl-CoA (HMG-CoA). Can catalyze the reverse reaction but at a much lower rate in vitro. HMG-CoA is then quickly degraded by another enzyme (such as HMG-CoA lyase) to give acetyl-CoA and acetoacetate. Uses other substrates such as (2E)-glutaconyl-CoA efficiently in vitro, and to a lesser extent 3-methylcrotonyl-CoA (3-methyl-(2E)-butenoyl-CoA), crotonyl-CoA ((2E)-butenoyl-CoA) and 3-hydroxybutanoyl-CoA (the missing carboxylate reduces affinity to the active site). Originally it was identified as an RNA-binding protein as it binds to AU-rich elements (AREs) in vitro. AREs direct rapid RNA degradation and mRNA deadenylation. Might have itaconyl-CoA hydratase activity, converting itaconyl-CoA into citramalyl-CoA in the C5-dicarboxylate catabolism pathway. The C5-dicarboxylate catabolism pathway is required to detoxify itaconate, an antimicrobial metabolite and immunomodulator produced by macrophages during certain infections, that can act as a vitamin B12-poisoning metabolite. This Mus musculus (Mouse) protein is Methylglutaconyl-CoA hydratase, mitochondrial (Auh).